The following is a 439-amino-acid chain: Protein translocase subunit SecY (439 aa).

The next 10 helical transmembrane spans lie at 28–48 (ILIT…PVPG), 73–93 (IFSG…LPYI), 127–147 (LTRY…AVWV), 156–176 (PLFT…VMWI), 179–199 (LITE…NIVA), 220–240 (VGGI…IVFV), 276–296 (GVMP…LANF), 318–338 (IYAL…SSLI), 375–395 (LTIL…AVEG), and 401–421 (TFQG…IDTA).

It belongs to the SecY/SEC61-alpha family. Component of the Sec protein translocase complex. Heterotrimer consisting of SecY, SecE and SecG subunits. The heterotrimers can form oligomers, although 1 heterotrimer is thought to be able to translocate proteins. Interacts with the ribosome. Interacts with SecDF, and other proteins may be involved. Interacts with SecA.

The protein localises to the cell inner membrane. It is found in the cellular thylakoid membrane. In terms of biological role, the central subunit of the protein translocation channel SecYEG. Consists of two halves formed by TMs 1-5 and 6-10. These two domains form a lateral gate at the front which open onto the bilayer between TMs 2 and 7, and are clamped together by SecE at the back. The channel is closed by both a pore ring composed of hydrophobic SecY resides and a short helix (helix 2A) on the extracellular side of the membrane which forms a plug. The plug probably moves laterally to allow the channel to open. The ring and the pore may move independently. This chain is Protein translocase subunit SecY, found in Synechococcus elongatus (strain ATCC 33912 / PCC 7942 / FACHB-805) (Anacystis nidulans R2).